The sequence spans 91 residues: MGGKSGGKFAGKRRDSGNRGLFKRRKFCRFTAEKVVEVDYKDVDVLKEFIAENGRIIPARITGTKAHYQRQLGTAIKRARFLALMPYTDLH.

The protein belongs to the bacterial ribosomal protein bS18 family. As to quaternary structure, part of the 30S ribosomal subunit. Forms a tight heterodimer with protein bS6.

Its function is as follows. Binds as a heterodimer with protein bS6 to the central domain of the 16S rRNA, where it helps stabilize the platform of the 30S subunit. In Thiobacillus denitrificans (strain ATCC 25259 / T1), this protein is Small ribosomal subunit protein bS18.